We begin with the raw amino-acid sequence, 354 residues long: Uroporphyrinogen decarboxylase (354 aa).

Substrate is bound by residues 27–31 (RQAGR), Asp-77, Tyr-153, Thr-208, and His-326.

It belongs to the uroporphyrinogen decarboxylase family. As to quaternary structure, homodimer.

It is found in the cytoplasm. It carries out the reaction uroporphyrinogen III + 4 H(+) = coproporphyrinogen III + 4 CO2. It functions in the pathway porphyrin-containing compound metabolism; protoporphyrin-IX biosynthesis; coproporphyrinogen-III from 5-aminolevulinate: step 4/4. In terms of biological role, catalyzes the decarboxylation of four acetate groups of uroporphyrinogen-III to yield coproporphyrinogen-III. The protein is Uroporphyrinogen decarboxylase of Neisseria meningitidis serogroup C (strain 053442).